The chain runs to 186 residues: TATA-box-binding protein F (186 aa).

2 tandem repeats follow at residues 10–86 (IENV…FDDL) and 101–179 (VQNI…NDRL).

The protein belongs to the TBP family.

Functionally, general factor that plays a role in the activation of archaeal genes transcribed by RNA polymerase. Binds specifically to the TATA box promoter element which lies close to the position of transcription initiation. The polypeptide is TATA-box-binding protein F (tbpF) (Halobacterium salinarum (strain ATCC 700922 / JCM 11081 / NRC-1) (Halobacterium halobium)).